The following is a 254-amino-acid chain: UPF0246 protein CPR_2119 (254 aa).

This sequence belongs to the UPF0246 family.

The polypeptide is UPF0246 protein CPR_2119 (Clostridium perfringens (strain SM101 / Type A)).